A 180-amino-acid chain; its full sequence is Diphosphoinositol polyphosphate phosphohydrolase 2 (180 aa).

At Met1 the chain carries N-acetylmethionine. Residues Arg10, 18 to 20, and 39 to 41 contribute to the substrate site; these read KKR and SSR. The 127-residue stretch at 18-144 folds into the Nudix hydrolase domain; sequence KKRAACLCFR…VHAEYLEKLK (127 aa). Residues Gly50 and Glu66 each contribute to the Mg(2+) site. A Nudix box motif is present at residues 51–72; it reads GGMEPEEEPGGAAVREVYEEAG. Glu69 functions as the Proton acceptor in the catalytic mechanism. Glu70 lines the Mg(2+) pocket. Substrate-binding positions include 89–91, Arg115, and Lys133; that span reads RKH.

It belongs to the Nudix hydrolase family. DIPP subfamily. Mg(2+) is required as a cofactor. The cofactor is Mn(2+). In terms of tissue distribution, expressed in heart and, at lower level in skeletal muscle, pancreas and kidney.

The protein resides in the cytoplasm. It catalyses the reaction diphospho-myo-inositol polyphosphate + H2O = myo-inositol polyphosphate + phosphate.. It carries out the reaction 5-diphospho-1D-myo-inositol 1,2,3,4,6-pentakisphosphate + H2O = 1D-myo-inositol hexakisphosphate + phosphate + H(+). The catalysed reaction is 3,5-bis(diphospho)-1D-myo-inositol 1,2,4,6-tetrakisphosphate + H2O = 3-diphospho-1D-myo-inositol 1,2,4,5,6-pentakisphosphate + phosphate + 2 H(+). The enzyme catalyses 5-diphospho-1D-myo-inositol 1,3,4,6-tetrakisphosphate + H2O = 1D-myo-inositol 1,3,4,5,6-pentakisphosphate + phosphate + H(+). It catalyses the reaction P(1),P(6)-bis(5'-adenosyl) hexaphosphate + H2O = 2 ATP + 2 H(+). It carries out the reaction P(1),P(5)-bis(5'-adenosyl) pentaphosphate + H2O = ADP + ATP + 2 H(+). The catalysed reaction is 5-phospho-alpha-D-ribose 1-diphosphate + H2O = alpha-D-ribose 1,5-bisphosphate + phosphate + H(+). Its function is as follows. Cleaves the beta-phosphate from diphosphoinositol polyphosphates such as PP-InsP5 (diphosphoinositol pentakisphosphate), PP-InsP4 (diphosphoinositol tetrakisphosphate) and [PP]2-InsP4 (bisdiphosphoinositol tetrakisphosphate), suggesting that it may play a role in signal transduction. Diadenosine polyphosphates, particularly Ap6A (P(1),P(6)-bis(5a-adenosyl) hexaphosphate) and Ap5A (P(1),P(5)-bis(5'-adenosyl) pentaphosphate) are downstream effectors of a signaling cascade that regulates cardiac KATP channels, can also be substrates, although with lower preference than the diphosphoinositol polyphosphates. Can also catalyze the hydrolysis of 5-phosphoribose 1-diphosphate, generating the glycolytic activator ribose 1,5-bisphosphate. Does not play a role in U8 snoRNA decapping activity. Binds U8 snoRNA. The sequence is that of Diphosphoinositol polyphosphate phosphohydrolase 2 from Homo sapiens (Human).